The sequence spans 349 residues: 2-oxoglutarate-Fe(II) type oxidoreductase hxnY (349 aa).

Positions 178 to 282 constitute a Fe2OG dioxygenase domain; that stretch reads GVATMRMLHY…RYSIPFFFSG (105 aa). Residues H205, D207, and H263 each contribute to the Fe cation site. R273 lines the 2-oxoglutarate pocket.

This sequence belongs to the iron/ascorbate-dependent oxidoreductase family. Fe(2+) is required as a cofactor.

In terms of biological role, 2-oxoglutarate-Fe(II) type oxidoreductase, part of the hnx cluster involved in the purine degradation. The nicotinate hydroxylase hnxS accepts nicotinate as a substrate and catalyzes the first step of nicotinate catabolism. The major facilitator-type transporters hxnP and hxnZ are probably involved in the uptake of nicotinate-derived metabolites, and the oxidoreductases hxnT and hxnY in the further metabolism of 6-OH nicotinic acid. This chain is 2-oxoglutarate-Fe(II) type oxidoreductase hxnY, found in Emericella nidulans (strain FGSC A4 / ATCC 38163 / CBS 112.46 / NRRL 194 / M139) (Aspergillus nidulans).